The chain runs to 1535 residues: Protein artichoke (1535 aa).

The signal sequence occupies residues 1 to 19 (MMLLPIFLLLCIGINLIRA). 34 LRR repeats span residues 64–87 (KGRI…FFGS), 89–110 (QIVR…WLNE), 112–135 (ENGL…SLNG), 136–157 (MINM…DFSG), 158–181 (LLSL…LFRH), 183–206 (PKLQ…LFDG), 207–230 (LISL…ALSR), 231–256 (LPNL…IVKD), 257–280 (LEHL…SFVD), 281–304 (LPNL…AFLR), 306–328 (PQLK…SLLQ), 331–356 (GSGV…LLDA), 357–380 (LPRL…ALRG), 382–404 (GTLE…ALMA), 406–429 (PALR…FWNL), 430–452 (PGLK…LLAG), 453–476 (LPSL…SFRH), 478–500 (PLLE…TLIH), 521–545 (LPRI…ASKD), 548–571 (LPNL…GFQG), 573–595 (MELR…SFIG), 597–619 (QRLE…ALLP), 620–643 (LAEL…FFSN), 645–667 (SRLE…AFDT), 669–691 (RSLE…LGNL), 692–714 (NNLR…VIGG), 716–738 (RNVV…TFRN), 739–762 (LPKL…ALKG), 764–786 (DELQ…VFEE), 788–810 (PSLL…SFHN), 811–834 (ANSL…GLRS), 835–858 (MRNL…PLKA), 860–882 (NWLV…PFET), and 883–906 (MPRL…TFRN). Positions 919–963 (NPIDCNCEMQWLSVWLQETNFPYPGPKCQDGRLLRSARMERSLCV) constitute an LRRCT domain. Disordered stretches follow at residues 1036–1055 (HSAI…NSNI), 1253–1331 (TQAR…DSQY), 1377–1416 (VTTT…GRST), and 1429–1449 (AQPT…EGVA). Polar residues predominate over residues 1253 to 1270 (TQARPKPTKSSGESSETA). 2 stretches are compositionally biased toward low complexity: residues 1271 to 1285 (TYEV…TTTT) and 1293 to 1315 (TSTT…TQVT). Polar residues-rich tracts occupy residues 1316 to 1328 (PAEN…TELD) and 1377 to 1391 (VTTT…NQVT). The segment covering 1398-1407 (TVPPPPPASP) has biased composition (pro residues).

It localises to the secreted. The protein localises to the extracellular space. It is found in the extracellular matrix. Its subcellular location is the cytoplasm. In terms of biological role, required for normal morphology and function of ciliated sensory organs. In Drosophila melanogaster (Fruit fly), this protein is Protein artichoke.